We begin with the raw amino-acid sequence, 418 residues long: Tyrosine--tRNA ligase (418 aa).

Tyrosine 34 contributes to the L-tyrosine binding site. The short motif at 39–48 (PTADSLHLGH) is the 'HIGH' region element. 2 residues coordinate L-tyrosine: tyrosine 169 and glutamine 173. A 'KMSKS' region motif is present at residues 229–233 (KFGKS). Position 232 (lysine 232) interacts with ATP. An S4 RNA-binding domain is found at 352–418 (LNIVDLLVTA…GKKKYFVLTY (67 aa)).

This sequence belongs to the class-I aminoacyl-tRNA synthetase family. TyrS type 1 subfamily. As to quaternary structure, homodimer.

It is found in the cytoplasm. It catalyses the reaction tRNA(Tyr) + L-tyrosine + ATP = L-tyrosyl-tRNA(Tyr) + AMP + diphosphate + H(+). In terms of biological role, catalyzes the attachment of tyrosine to tRNA(Tyr) in a two-step reaction: tyrosine is first activated by ATP to form Tyr-AMP and then transferred to the acceptor end of tRNA(Tyr). The sequence is that of Tyrosine--tRNA ligase from Streptococcus gordonii (strain Challis / ATCC 35105 / BCRC 15272 / CH1 / DL1 / V288).